The following is a 307-amino-acid chain: NAD kinase 1 (307 aa).

Catalysis depends on Asp67, which acts as the Proton acceptor. Residues 67 to 68, 149 to 150, Arg160, Asp181, and 192 to 197 contribute to the NAD(+) site; these read DG, NE, and TCYTSS.

This sequence belongs to the NAD kinase family. It depends on a divalent metal cation as a cofactor.

It is found in the cytoplasm. The enzyme catalyses NAD(+) + ATP = ADP + NADP(+) + H(+). Involved in the regulation of the intracellular balance of NAD and NADP, and is a key enzyme in the biosynthesis of NADP. Catalyzes specifically the phosphorylation on 2'-hydroxyl of the adenosine moiety of NAD to yield NADP. Essential for photoheterotrophic growth. Has a significant function in the oxidative pentose phosphate (OPP) pathway for glucose catabolism under photoheterotrophic conditions. Is also involved in cellular redox homeostasis. This chain is NAD kinase 1, found in Synechocystis sp. (strain ATCC 27184 / PCC 6803 / Kazusa).